Here is a 324-residue protein sequence, read N- to C-terminus: MKLVINGEERNFSASMTVEALLGELGVDSRKVAVERNLEIVPKSSYAQVAVNDGDKLEIVAFIGGGSDQADSFTVAGKTFNSRLLVGTGKYKDFEETALAIEASGAEIVTVAVRRVNLSDPSKPMLVDYVSPKKYTFLPNTAGCYTADDSVRTLRLAREAGGWNLVKLEVLGDQTTLYPNMPETLKAAEALIKDGFEVMVYCSDDPIQAKMLEDMGCVAIMPLGSLIGSGLGILNPTTIRIIKDTVKVPVLVDAGVGTASDAALAMELGCDGVLMNTAIAHAKDPIRMARAMKLAIEAGRLSYLAGRMPKKSYADPSSPTSGLI.

The Schiff-base intermediate with DXP role is filled by K167. 1-deoxy-D-xylulose 5-phosphate-binding positions include G228, 254–255 (AG), and 276–277 (NT).

This sequence belongs to the ThiG family. As to quaternary structure, homotetramer. Forms heterodimers with either ThiH or ThiS.

It localises to the cytoplasm. The catalysed reaction is [ThiS sulfur-carrier protein]-C-terminal-Gly-aminoethanethioate + 2-iminoacetate + 1-deoxy-D-xylulose 5-phosphate = [ThiS sulfur-carrier protein]-C-terminal Gly-Gly + 2-[(2R,5Z)-2-carboxy-4-methylthiazol-5(2H)-ylidene]ethyl phosphate + 2 H2O + H(+). It functions in the pathway cofactor biosynthesis; thiamine diphosphate biosynthesis. Functionally, catalyzes the rearrangement of 1-deoxy-D-xylulose 5-phosphate (DXP) to produce the thiazole phosphate moiety of thiamine. Sulfur is provided by the thiocarboxylate moiety of the carrier protein ThiS. In vitro, sulfur can be provided by H(2)S. This is Thiazole synthase from Paramagnetospirillum magneticum (strain ATCC 700264 / AMB-1) (Magnetospirillum magneticum).